We begin with the raw amino-acid sequence, 364 residues long: Phosphoserine aminotransferase (364 aa).

Position 46 (arginine 46) interacts with L-glutamate. Pyridoxal 5'-phosphate contacts are provided by residues 80–81 (AR), tryptophan 106, threonine 157, aspartate 176, and glutamine 199. N6-(pyridoxal phosphate)lysine is present on lysine 200. Residue 241–242 (NT) coordinates pyridoxal 5'-phosphate.

This sequence belongs to the class-V pyridoxal-phosphate-dependent aminotransferase family. SerC subfamily. In terms of assembly, homodimer. The cofactor is pyridoxal 5'-phosphate.

It localises to the cytoplasm. The catalysed reaction is O-phospho-L-serine + 2-oxoglutarate = 3-phosphooxypyruvate + L-glutamate. It catalyses the reaction 4-(phosphooxy)-L-threonine + 2-oxoglutarate = (R)-3-hydroxy-2-oxo-4-phosphooxybutanoate + L-glutamate. Its pathway is amino-acid biosynthesis; L-serine biosynthesis; L-serine from 3-phospho-D-glycerate: step 2/3. It functions in the pathway cofactor biosynthesis; pyridoxine 5'-phosphate biosynthesis; pyridoxine 5'-phosphate from D-erythrose 4-phosphate: step 3/5. Catalyzes the reversible conversion of 3-phosphohydroxypyruvate to phosphoserine and of 3-hydroxy-2-oxo-4-phosphonooxybutanoate to phosphohydroxythreonine. The sequence is that of Phosphoserine aminotransferase from Vibrio vulnificus (strain YJ016).